We begin with the raw amino-acid sequence, 540 residues long: Glucose-6-phosphate isomerase (540 aa).

The active-site Proton donor is the Glu-346. Active-site residues include His-377 and Lys-505.

Belongs to the GPI family.

Its subcellular location is the cytoplasm. It carries out the reaction alpha-D-glucose 6-phosphate = beta-D-fructose 6-phosphate. Its pathway is carbohydrate biosynthesis; gluconeogenesis. It functions in the pathway carbohydrate degradation; glycolysis; D-glyceraldehyde 3-phosphate and glycerone phosphate from D-glucose: step 2/4. Its function is as follows. Catalyzes the reversible isomerization of glucose-6-phosphate to fructose-6-phosphate. The sequence is that of Glucose-6-phosphate isomerase from Francisella tularensis subsp. tularensis (strain SCHU S4 / Schu 4).